We begin with the raw amino-acid sequence, 138 residues long: Small ribosomal subunit protein uS11c (138 aa).

The segment at 1–23 (MAKPIPRIGSRRNGRISSRKSTR) is disordered. A compositionally biased stretch (basic residues) spans 9 to 23 (GSRRNGRISSRKSTR).

The protein belongs to the universal ribosomal protein uS11 family. As to quaternary structure, part of the 30S ribosomal subunit.

It is found in the plastid. Its subcellular location is the chloroplast. The polypeptide is Small ribosomal subunit protein uS11c (Cucumis sativus (Cucumber)).